The chain runs to 465 residues: MNLGGNRFVQIGNGMSNIMYTDANGAVRWEQISPPAGFPQQQRGRGRGHVAFGLPNTLDWLPGFVQATPNSITISNMGGIQISSAGVITAAINSEQNSWMLSSFNPSLKLTRQVTLTDFCDPTAERPGLPIIRLRHHLDAIGSSPSSTPPGRNPQELDEAWAALSELSVSGRSDTTGLRPSLLSLTFLVASRSGEYSDKAAAEAVRAHVLANYRDRRTEQRLDRFGEYLQAMVRTHVFPHKHMTVFGGLISHVIQDKLASLTAVAGGVQEGARTNNSAVPRSSVYVPACAFLDVDHELKLGDASAKFVYLIFVYSQRLRREGVRVYVAVSKFDEVAFEDAVSFLFHKARTESAIRGTEGADAPEPHPNAALPLQELSSSRCEPRCPPSRLNNREFTNALYQWAPDLRGRPNRTSCMYAAYIRLGAIASDSPRTTRRSERFGSVDMPVVWLENVRWDPQDWVECSY.

This sequence belongs to the herpesviridae TRX1 protein family. Interacts with TRX2, MCP and capsid vertex component 2/CVC2.

It is found in the virion. The protein resides in the host nucleus. Structural component of the T=16 icosahedral capsid. The capsid is composed of pentamers and hexamers of major capsid protein/MCP, which are linked together by heterotrimers called triplexes. These triplexes are formed by a single molecule of triplex protein 1/TRX1 and two copies of triplex protein 2/TRX2. Additionally, TRX1 is required for efficient transport of TRX2 to the nucleus, which is the site of capsid assembly. In Equus caballus (Horse), this protein is Triplex capsid protein 1.